The sequence spans 277 residues: GPALPP motifs-containing protein 1 (277 aa).

The tract at residues 1–240 (MARDLIGPAL…VWTDTPADRE (240 aa)) is disordered. At A2 the chain carries N-acetylalanine. The short motif at 7–12 (GPALPP) is the GPALPP motif 1 element. The residue at position 28 (S28) is a Phosphoserine. A GPALPP motif 2 motif is present at residues 32 to 37 (GPALPP). 2 stretches are compositionally biased toward acidic residues: residues 60-69 (GNQESEEDDT) and 81-90 (DDDDDDDDEG). Residues 93-98 (GPALPP) carry the GPALPP motif 3 motif. S106 bears the Phosphoserine mark. The span at 108 to 117 (PRPMIGPALP) shows a compositional bias: pro residues. The short motif at 113-118 (GPALPP) is the GPALPP motif 4 element. A phosphoserine mark is found at S138 and S143. At T147 the chain carries Phosphothreonine. S149 and S150 each carry phosphoserine. Residues 172 to 196 (EFEKRAQRMKEKLTKGDDDSSKPIT) show a composition bias toward basic and acidic residues.

The sequence is that of GPALPP motifs-containing protein 1 (GPALPP1) from Bos taurus (Bovine).